The primary structure comprises 461 residues: Decaprenylphosphoryl-beta-D-ribose oxidase (461 aa).

Positions 19–194 (TAPSVANVLR…MRATIEMTPT (176 aa)) constitute an FAD-binding PCMH-type domain. FAD-binding positions include 53-63 (ARGLGRSYGDN), Gly117, 122-125 (TVGG), 129-132 (CDIH), Ile184, and Tyr415.

Belongs to the DprE1 family. Monomer. Although forming apparent dimer in crystals, DprE1 does not dimerize appreciably in solution. Interacts with DprE2 to form an epimerase complex.

The protein resides in the periplasm. The enzyme catalyses trans,octa-cis-decaprenylphospho-beta-D-ribofuranose + FAD + H(+) = trans,octa-cis-decaprenylphospho-beta-D-erythro-pentofuranosid-2-ulose + FADH2. Its pathway is cell wall biogenesis; cell wall polysaccharide biosynthesis. Its activity is regulated as follows. Is inhibited by 8-nitro-benzothiazinones (BTZs) such as BTZ043 and PBTZ169; BTZs are a new class of antimycobacterial agents that kill M.tuberculosis in vitro, ex vivo, and in mouse models of tuberculosis. Is also inhibited by dinitrobenzamide derivatives (DNBs), which thus block formation of both cell-wall lipoarabinomannan and arabinogalactan via inhibition of decaprenyl-phospho-arabinose (DPA) synthesis; DNBs show high activity against intracellular growth of M.tuberculosis inside macrophages, including extensively drug resistant (XDR) strains. BTZs and DNBs are suicide inhibitors that act via covalent modification of DprE1; the essential nitro group of these compounds is reduced by DprE1 to a nitroso group, which then specifically reacts with Cys-387 of DprE1 to form an irreversible semimercaptal adduct. Many other compounds with diverse scaffolds were found to act as either covalent (e.g. nitroquinoxalines, nitroimidazoles) or non-covalent (e.g. the benzothiazole derivative TCA1, the 2-carboxyquinoxaline Ty38C, 8-pyrrole-benzothiazinones, 1,4-azaindoles, pyrazolopyridones, 4-aminoquinolone piperidine amides) DprE1 inhibitors. Its function is as follows. Component of the DprE1-DprE2 complex that catalyzes the 2-step epimerization of decaprenyl-phospho-ribose (DPR) to decaprenyl-phospho-arabinose (DPA), a key precursor that serves as the arabinose donor required for the synthesis of cell-wall arabinans. DprE1 catalyzes the first step of epimerization, namely FAD-dependent oxidation of the C2' hydroxyl of DPR to yield the keto intermediate decaprenyl-phospho-2'-keto-D-arabinose (DPX). The intermediate DPX is then transferred to DprE2 subunit of the epimerase complex, most probably through a 'substrate channel' at the interface of DprE1-DprE2 complex. Can also use farnesyl-phosphoryl-beta-D-ribofuranose (FPR) as substrate in vitro. DprE1 is a highly vulnerable and fully validated tuberculosis drug target. This is Decaprenylphosphoryl-beta-D-ribose oxidase from Mycobacterium tuberculosis (strain CDC 1551 / Oshkosh).